We begin with the raw amino-acid sequence, 363 residues long: Peroxin-36 (363 aa).

Residues 1-193 lie on the Cytoplasmic side of the membrane; sequence MSNLEKQIRL…ESFFINSFEQ (193 aa). 2 disordered regions span residues 71 to 114 and 128 to 157; these read QNHQ…DTST and TNSN…SKSG. Positions 97 to 114 are enriched in low complexity; that stretch reads VDSNSDSSSSETLIDTST. The chain crosses the membrane as a helical span at residues 194-213; it reads LIALFDNFYFLSSLIGFNTS. Over 214-232 the chain is Peroxisomal; that stretch reads NSNSKITRLLRNFIKQASK. A helical transmembrane segment spans residues 233 to 250; that stretch reads IWLVIIFLTVKNLFIRMI. Residues 251–363 lie on the Cytoplasmic side of the membrane; that stretch reads KLNRTEKKVK…SSDDIIDEYA (113 aa).

The protein localises to the peroxisome membrane. Its function is as follows. Controls peroxisome morphology and abundance under conditions of peroxisome proliferation such as oleate and methanol media. Has additional function(s), which is not present in its functional homologs such as Saccharomyces cerevisea PEX34 or human PEX16. The polypeptide is Peroxin-36 (Komagataella phaffii (strain GS115 / ATCC 20864) (Yeast)).